The chain runs to 187 residues: Ribosome-recycling factor (187 aa).

The protein belongs to the RRF family.

The protein resides in the cytoplasm. Functionally, responsible for the release of ribosomes from messenger RNA at the termination of protein biosynthesis. May increase the efficiency of translation by recycling ribosomes from one round of translation to another. This is Ribosome-recycling factor from Paracoccus zeaxanthinifaciens.